A 294-amino-acid polypeptide reads, in one-letter code: Glyceraldehyde-3-phosphate dehydrogenase (294 aa).

NAD(+)-binding residues include Asp-19, Lys-63, and Thr-105. Residues 134–136 (SCT), Thr-165, 194–195 (TG), and Arg-217 contribute to the D-glyceraldehyde 3-phosphate site. Residue Cys-135 is the Nucleophile of the active site.

This sequence belongs to the glyceraldehyde-3-phosphate dehydrogenase family. As to quaternary structure, homotetramer.

It is found in the cytoplasm. It carries out the reaction D-glyceraldehyde 3-phosphate + phosphate + NAD(+) = (2R)-3-phospho-glyceroyl phosphate + NADH + H(+). It participates in carbohydrate degradation; glycolysis; pyruvate from D-glyceraldehyde 3-phosphate: step 1/5. Its function is as follows. Catalyzes the oxidative phosphorylation of glyceraldehyde 3-phosphate (G3P) to 1,3-bisphosphoglycerate (BPG) using the cofactor NAD. The first reaction step involves the formation of a hemiacetal intermediate between G3P and a cysteine residue, and this hemiacetal intermediate is then oxidized to a thioester, with concomitant reduction of NAD to NADH. The reduced NADH is then exchanged with the second NAD, and the thioester is attacked by a nucleophilic inorganic phosphate to produce BPG. This chain is Glyceraldehyde-3-phosphate dehydrogenase (gap), found in Atlantibacter hermannii (Escherichia hermannii).